We begin with the raw amino-acid sequence, 556 residues long: 2-succinyl-5-enolpyruvyl-6-hydroxy-3-cyclohexene-1-carboxylate synthase (556 aa).

Belongs to the TPP enzyme family. MenD subfamily. In terms of assembly, homodimer. Requires Mg(2+) as cofactor. Mn(2+) serves as cofactor. It depends on thiamine diphosphate as a cofactor.

The enzyme catalyses isochorismate + 2-oxoglutarate + H(+) = 5-enolpyruvoyl-6-hydroxy-2-succinyl-cyclohex-3-ene-1-carboxylate + CO2. It participates in quinol/quinone metabolism; 1,4-dihydroxy-2-naphthoate biosynthesis; 1,4-dihydroxy-2-naphthoate from chorismate: step 2/7. It functions in the pathway quinol/quinone metabolism; menaquinone biosynthesis. Functionally, catalyzes the thiamine diphosphate-dependent decarboxylation of 2-oxoglutarate and the subsequent addition of the resulting succinic semialdehyde-thiamine pyrophosphate anion to isochorismate to yield 2-succinyl-5-enolpyruvyl-6-hydroxy-3-cyclohexene-1-carboxylate (SEPHCHC). In Escherichia coli O7:K1 (strain IAI39 / ExPEC), this protein is 2-succinyl-5-enolpyruvyl-6-hydroxy-3-cyclohexene-1-carboxylate synthase.